Here is a 964-residue protein sequence, read N- to C-terminus: Lon protease homolog, mitochondrial (964 aa).

Positions 89–300 (VIALPLPHRP…LTLELVKKEM (212 aa)) constitute a Lon N-terminal domain. 455–462 (GPPGVGKT) lines the ATP pocket. Residues 663–740 (GVSNEPDHES…TSKGNKGTDG (78 aa)) are disordered. The span at 673 to 687 (VSASVTEESGNGDNT) shows a compositional bias: polar residues. Over residues 688–698 (TTKDEILKDPA) the composition is skewed to basic and acidic residues. Residues 703–712 (SVTNNVTNPA) show a composition bias toward polar residues. A Lon proteolytic domain is found at 773–957 (HTPVGVVMGL…SEIYDLAFQS (185 aa)). Catalysis depends on residues Ser863 and Lys906.

Belongs to the peptidase S16 family. In terms of assembly, homoheptamer. Organized in a ring with a central cavity.

It is found in the mitochondrion matrix. The catalysed reaction is Hydrolysis of proteins in presence of ATP.. Functionally, ATP-dependent serine protease that mediates the selective degradation of misfolded, unassembled or oxidatively damaged polypeptides as well as certain short-lived regulatory proteins in the mitochondrial matrix. May also have a chaperone function in the assembly of inner membrane protein complexes. Participates in the regulation of mitochondrial gene expression and in the maintenance of the integrity of the mitochondrial genome. Binds to mitochondrial DNA in a site-specific manner. This is Lon protease homolog, mitochondrial (LON2) from Zea mays (Maize).